We begin with the raw amino-acid sequence, 363 residues long: UDP-N-acetylglucosamine--N-acetylmuramyl-(pentapeptide) pyrophosphoryl-undecaprenol N-acetylglucosamine transferase (363 aa).

UDP-N-acetyl-alpha-D-glucosamine contacts are provided by residues 10 to 12, Asn-124, Ser-195, Ile-250, and Gln-295; that span reads TGG.

The protein belongs to the glycosyltransferase 28 family. MurG subfamily.

The protein resides in the cell membrane. The catalysed reaction is di-trans,octa-cis-undecaprenyl diphospho-N-acetyl-alpha-D-muramoyl-L-alanyl-D-glutamyl-meso-2,6-diaminopimeloyl-D-alanyl-D-alanine + UDP-N-acetyl-alpha-D-glucosamine = di-trans,octa-cis-undecaprenyl diphospho-[N-acetyl-alpha-D-glucosaminyl-(1-&gt;4)]-N-acetyl-alpha-D-muramoyl-L-alanyl-D-glutamyl-meso-2,6-diaminopimeloyl-D-alanyl-D-alanine + UDP + H(+). It participates in cell wall biogenesis; peptidoglycan biosynthesis. In terms of biological role, cell wall formation. Catalyzes the transfer of a GlcNAc subunit on undecaprenyl-pyrophosphoryl-MurNAc-pentapeptide (lipid intermediate I) to form undecaprenyl-pyrophosphoryl-MurNAc-(pentapeptide)GlcNAc (lipid intermediate II). The polypeptide is UDP-N-acetylglucosamine--N-acetylmuramyl-(pentapeptide) pyrophosphoryl-undecaprenol N-acetylglucosamine transferase (Listeria welshimeri serovar 6b (strain ATCC 35897 / DSM 20650 / CCUG 15529 / CIP 8149 / NCTC 11857 / SLCC 5334 / V8)).